The sequence spans 317 residues: Alkylsulfatase (317 aa).

H78 is a substrate binding site. Fe cation is bound by residues H105 and D107. Residue V108 participates in substrate binding. T132 lines the 2-oxoglutarate pocket. H261 contacts Fe cation. Residues R272 and R276 each contribute to the 2-oxoglutarate site.

It belongs to the TfdA dioxygenase family. In terms of assembly, homotetramer. The cofactor is Fe(2+).

Functionally, alpha-ketoglutarate-dependent dioxygenase that in vitro catalyzes the oxygenolytic release of sulfite from hexylsulfate. The polypeptide is Alkylsulfatase (Acinetobacter baylyi (strain ATCC 33305 / BD413 / ADP1)).